The sequence spans 71 residues: Brevinin-1CG4 (71 aa).

The first 22 residues, 1 to 22 (MFTLKKSLLLLFFLGTINLSLC), serve as a signal peptide directing secretion. A propeptide spans 23-45 (EQERNADEEERRDDSDKRDVEVE) (removed in mature form). Residues C65 and C71 are joined by a disulfide bond.

The protein belongs to the frog skin active peptide (FSAP) family. Brevinin subfamily. In terms of tissue distribution, expressed by the skin glands.

Its subcellular location is the secreted. Functionally, antimicrobial peptide active against a variety of Gram-positive and some Gram-negative bacterial strains. Has antifungal activity against C.albicans ATCC 10231 and a slime mold isolate. Has hemolytic activity against human erythrocytes. This Amolops chunganensis (Chungan torrent frog) protein is Brevinin-1CG4.